The following is a 429-amino-acid chain: G2/mitotic-specific cyclin-B1 (429 aa).

The disordered stretch occupies residues 71–114 (TGKVSAKIPPPKPLEKVPPVSEPEVELAETHEPEPVMDEKLSPE). At Lys73 the chain carries N6-acetyllysine. The span at 98 to 112 (AETHEPEPVMDEKLS) shows a compositional bias: basic and acidic residues. Ser122 bears the Phosphoserine; by CDK1 mark. Ser124 is subject to Phosphoserine. Residue Ser129 is modified to Phosphoserine; by PLK1. At Ser143 the chain carries Phosphoserine. Interaction with CDK2 regions lie at residues 165-173 (EYVKDIYAY) and 254-257 (YEEM). Position 317 is a phosphothreonine (Thr317).

This sequence belongs to the cyclin family. Cyclin AB subfamily. Interacts with the CDC2 protein kinase to form a serine/threonine kinase holoenzyme complex also known as maturation promoting factor (MPF). The cyclin subunit imparts substrate specificity to the complex. Binds HEI10. Interacts with catalytically active RALBP1 and CDC2 during mitosis to form an endocytotic complex during interphase. Interacts with CCNF; interaction is required for nuclear localization. Interacts with CDK5RAP3. Interacts with RFPL4A and UBE2A. Interacts with INCA1. Ubiquitinated by the SCF(NIPA) complex during interphase, leading to its destruction. Not ubiquitinated during G2/M phases. Post-translationally, phosphorylated by PLK1 at Ser-129 on centrosomes during prophase: phosphorylation by PLK1 does not cause nuclear import. Phosphorylation at Ser-143 was also reported to be mediated by PLK1 but Ser-129 seems to be the primary phosphorylation site.

The protein localises to the cytoplasm. The protein resides in the nucleus. It localises to the cytoskeleton. Its subcellular location is the microtubule organizing center. It is found in the centrosome. Essential for the control of the cell cycle at the G2/M (mitosis) transition. This chain is G2/mitotic-specific cyclin-B1 (CCNB1), found in Mesocricetus auratus (Golden hamster).